The following is a 148-amino-acid chain: 1,4-dihydroxy-2-naphthoyl-CoA hydrolase (148 aa).

D15 is a catalytic residue.

It belongs to the 4-hydroxybenzoyl-CoA thioesterase family. DHNA-CoA hydrolase subfamily.

The enzyme catalyses 1,4-dihydroxy-2-naphthoyl-CoA + H2O = 1,4-dihydroxy-2-naphthoate + CoA + H(+). The protein operates within cofactor biosynthesis; phylloquinone biosynthesis. Its pathway is quinol/quinone metabolism; 1,4-dihydroxy-2-naphthoate biosynthesis; 1,4-dihydroxy-2-naphthoate from chorismate: step 7/7. In terms of biological role, catalyzes the hydrolysis of 1,4-dihydroxy-2-naphthoyl-CoA (DHNA-CoA) to 1,4-dihydroxy-2-naphthoate (DHNA), a reaction involved in phylloquinone (vitamin K1) biosynthesis. The sequence is that of 1,4-dihydroxy-2-naphthoyl-CoA hydrolase from Nostoc punctiforme (strain ATCC 29133 / PCC 73102).